The following is a 210-amino-acid chain: Large ribosomal subunit protein uL3 (210 aa).

The tract at residues 131 to 154 is disordered; that stretch reads GPMSHGSKYHRRVGSMGATTDPGR.

This sequence belongs to the universal ribosomal protein uL3 family. Part of the 50S ribosomal subunit. Forms a cluster with proteins L14 and L19.

One of the primary rRNA binding proteins, it binds directly near the 3'-end of the 23S rRNA, where it nucleates assembly of the 50S subunit. In Thermoanaerobacter pseudethanolicus (strain ATCC 33223 / 39E) (Clostridium thermohydrosulfuricum), this protein is Large ribosomal subunit protein uL3.